Here is a 302-residue protein sequence, read N- to C-terminus: Stanniocalcin-2 (302 aa).

A signal peptide spans 1 to 24 (MCAERLGQFMTLALVLATFDPARG). Positions 23–44 (RGTDATNPPEGPQDRSSQQKGR) are disordered. N-linked (GlcNAc...) asparagine glycosylation is present at asparagine 73. The tract at residues 217-302 (KPPTAPPERQ…EQSEYSDIRR (86 aa)) is disordered. The segment covering 227–264 (PQVDRTKLSRAHHGEAGHHLPEPSSRETGRGAKGERGS) has biased composition (basic and acidic residues). Serine 250 and serine 251 each carry phosphoserine; by FAM20C. Phosphothreonine; by FAM20C is present on threonine 254.

It belongs to the stanniocalcin family. In terms of assembly, homodimer; disulfide-linked. In terms of tissue distribution, expressed in a variety of tissues including muscle, heart, pancreas, kidney, spleen, prostate, small intestine, colon and peripheral blood leukocytes.

Its subcellular location is the secreted. Its function is as follows. Has an anti-hypocalcemic action on calcium and phosphate homeostasis. This chain is Stanniocalcin-2 (STC2), found in Homo sapiens (Human).